Consider the following 550-residue polypeptide: Glucose-6-phosphate isomerase 1 (550 aa).

Glutamate 353 (proton donor) is an active-site residue. Residues histidine 384 and lysine 512 contribute to the active site.

It belongs to the GPI family.

Its subcellular location is the cytoplasm. It catalyses the reaction alpha-D-glucose 6-phosphate = beta-D-fructose 6-phosphate. The protein operates within carbohydrate biosynthesis; gluconeogenesis. Its pathway is carbohydrate degradation; glycolysis; D-glyceraldehyde 3-phosphate and glycerone phosphate from D-glucose: step 2/4. Functionally, catalyzes the reversible isomerization of glucose-6-phosphate to fructose-6-phosphate. This chain is Glucose-6-phosphate isomerase 1, found in Thiobacillus denitrificans (strain ATCC 25259 / T1).